The following is a 289-amino-acid chain: Acetyl-coenzyme A carboxylase carboxyl transferase subunit beta (289 aa).

The region spanning 28-289 is the CoA carboxyltransferase N-terminal domain; sequence VMTKCPKCKK…QGGEMAVWQS (262 aa). Residues Cys32, Cys35, Cys51, and Cys54 each contribute to the Zn(2+) site. The C4-type zinc-finger motif lies at 32-54; it reads CPKCKKIMYTKEVLKNLKVCVNC.

Belongs to the AccD/PCCB family. In terms of assembly, acetyl-CoA carboxylase is a heterohexamer composed of biotin carboxyl carrier protein (AccB), biotin carboxylase (AccC) and two subunits each of ACCase subunit alpha (AccA) and ACCase subunit beta (AccD). Zn(2+) serves as cofactor.

The protein localises to the cytoplasm. The catalysed reaction is N(6)-carboxybiotinyl-L-lysyl-[protein] + acetyl-CoA = N(6)-biotinyl-L-lysyl-[protein] + malonyl-CoA. It participates in lipid metabolism; malonyl-CoA biosynthesis; malonyl-CoA from acetyl-CoA: step 1/1. Component of the acetyl coenzyme A carboxylase (ACC) complex. Biotin carboxylase (BC) catalyzes the carboxylation of biotin on its carrier protein (BCCP) and then the CO(2) group is transferred by the transcarboxylase to acetyl-CoA to form malonyl-CoA. The polypeptide is Acetyl-coenzyme A carboxylase carboxyl transferase subunit beta (Bacillus thuringiensis subsp. konkukian (strain 97-27)).